The primary structure comprises 238 residues: Sugar fermentation stimulation protein homolog (238 aa).

The protein belongs to the SfsA family.

This chain is Sugar fermentation stimulation protein homolog, found in Haemophilus influenzae (strain PittGG).